Consider the following 365-residue polypeptide: Aminomethyltransferase (365 aa).

It belongs to the GcvT family. In terms of assembly, the glycine cleavage system is composed of four proteins: P, T, L and H.

The enzyme catalyses N(6)-[(R)-S(8)-aminomethyldihydrolipoyl]-L-lysyl-[protein] + (6S)-5,6,7,8-tetrahydrofolate = N(6)-[(R)-dihydrolipoyl]-L-lysyl-[protein] + (6R)-5,10-methylene-5,6,7,8-tetrahydrofolate + NH4(+). In terms of biological role, the glycine cleavage system catalyzes the degradation of glycine. The polypeptide is Aminomethyltransferase (Serratia proteamaculans (strain 568)).